The primary structure comprises 223 residues: UPF0758 protein Plut_0598 (223 aa).

The region spanning 100-222 (RVQGAKDVFE…WFSFRESNLL (123 aa)) is the MPN domain. Zn(2+) contacts are provided by His-171, His-173, and Asp-184. The short motif at 171 to 184 (HNHPSGDTEPSNAD) is the JAMM motif element.

The protein belongs to the UPF0758 family.

In Chlorobium luteolum (strain DSM 273 / BCRC 81028 / 2530) (Pelodictyon luteolum), this protein is UPF0758 protein Plut_0598.